Consider the following 392-residue polypeptide: Methylthioribose-1-phosphate isomerase (392 aa).

Asp-267 (proton donor) is an active-site residue.

This sequence belongs to the eIF-2B alpha/beta/delta subunits family. MtnA subfamily.

The protein resides in the cytoplasm. It is found in the nucleus. The catalysed reaction is 5-(methylsulfanyl)-alpha-D-ribose 1-phosphate = 5-(methylsulfanyl)-D-ribulose 1-phosphate. It functions in the pathway amino-acid biosynthesis; L-methionine biosynthesis via salvage pathway; L-methionine from S-methyl-5-thio-alpha-D-ribose 1-phosphate: step 1/6. In terms of biological role, catalyzes the interconversion of methylthioribose-1-phosphate (MTR-1-P) into methylthioribulose-1-phosphate (MTRu-1-P). The sequence is that of Methylthioribose-1-phosphate isomerase from Ajellomyces dermatitidis (strain ER-3 / ATCC MYA-2586) (Blastomyces dermatitidis).